The following is a 180-amino-acid chain: Acireductone dioxygenase (180 aa).

4 residues coordinate Fe(2+): histidine 96, histidine 98, glutamate 102, and histidine 140. Ni(2+)-binding residues include histidine 96, histidine 98, glutamate 102, and histidine 140.

It belongs to the acireductone dioxygenase (ARD) family. In terms of assembly, monomer. Fe(2+) serves as cofactor. The cofactor is Ni(2+).

The enzyme catalyses 1,2-dihydroxy-5-(methylsulfanyl)pent-1-en-3-one + O2 = 3-(methylsulfanyl)propanoate + CO + formate + 2 H(+). It carries out the reaction 1,2-dihydroxy-5-(methylsulfanyl)pent-1-en-3-one + O2 = 4-methylsulfanyl-2-oxobutanoate + formate + 2 H(+). It participates in amino-acid biosynthesis; L-methionine biosynthesis via salvage pathway; L-methionine from S-methyl-5-thio-alpha-D-ribose 1-phosphate: step 5/6. In terms of biological role, catalyzes 2 different reactions between oxygen and the acireductone 1,2-dihydroxy-3-keto-5-methylthiopentene (DHK-MTPene) depending upon the metal bound in the active site. Fe-containing acireductone dioxygenase (Fe-ARD) produces formate and 2-keto-4-methylthiobutyrate (KMTB), the alpha-ketoacid precursor of methionine in the methionine recycle pathway. Ni-containing acireductone dioxygenase (Ni-ARD) produces methylthiopropionate, carbon monoxide and formate, and does not lie on the methionine recycle pathway. In Synechococcus sp. (strain WH7803), this protein is Acireductone dioxygenase.